A 182-amino-acid chain; its full sequence is Inosine/xanthosine triphosphatase (182 aa).

Positions 38 and 68 each coordinate Mg(2+). 68 to 69 (EA) is a binding site for substrate.

This sequence belongs to the YjjX NTPase family. In terms of assembly, homodimer. Mg(2+) serves as cofactor. The cofactor is Mn(2+).

It catalyses the reaction XTP + H2O = XDP + phosphate + H(+). The enzyme catalyses ITP + H2O = IDP + phosphate + H(+). Functionally, phosphatase that hydrolyzes non-canonical purine nucleotides such as XTP and ITP to their respective diphosphate derivatives. Probably excludes non-canonical purines from DNA/RNA precursor pool, thus preventing their incorporation into DNA/RNA and avoiding chromosomal lesions. The sequence is that of Inosine/xanthosine triphosphatase from Erwinia tasmaniensis (strain DSM 17950 / CFBP 7177 / CIP 109463 / NCPPB 4357 / Et1/99).